Reading from the N-terminus, the 399-residue chain is Probable 2,3-bisphosphoglycerate-independent phosphoglycerate mutase (399 aa).

It belongs to the BPG-independent phosphoglycerate mutase family. A-PGAM subfamily.

It catalyses the reaction (2R)-2-phosphoglycerate = (2R)-3-phosphoglycerate. It participates in carbohydrate degradation; glycolysis; pyruvate from D-glyceraldehyde 3-phosphate: step 3/5. Catalyzes the interconversion of 2-phosphoglycerate and 3-phosphoglycerate. The sequence is that of Probable 2,3-bisphosphoglycerate-independent phosphoglycerate mutase from Geobacter sulfurreducens (strain ATCC 51573 / DSM 12127 / PCA).